The chain runs to 365 residues: 3-isopropylmalate dehydrogenase (365 aa).

Gly-78–Glu-89 contacts NAD(+). Residues Arg-96, Arg-106, Arg-135, and Asp-224 each contribute to the substrate site. Mg(2+)-binding residues include Asp-224, Asp-249, and Asp-253. NAD(+) is bound at residue Gly-289–Asn-301.

The protein belongs to the isocitrate and isopropylmalate dehydrogenases family. In terms of assembly, homodimer. Mg(2+) serves as cofactor. The cofactor is Mn(2+).

It is found in the cytoplasm. The catalysed reaction is (2R,3S)-3-isopropylmalate + NAD(+) = 4-methyl-2-oxopentanoate + CO2 + NADH. It functions in the pathway amino-acid biosynthesis; L-leucine biosynthesis; L-leucine from 3-methyl-2-oxobutanoate: step 3/4. In terms of biological role, catalyzes the oxidation of 3-carboxy-2-hydroxy-4-methylpentanoate (3-isopropylmalate) to 3-carboxy-4-methyl-2-oxopentanoate. The product decarboxylates to 4-methyl-2 oxopentanoate. This Zymoseptoria tritici (Speckled leaf blotch fungus) protein is 3-isopropylmalate dehydrogenase (LEUC).